The primary structure comprises 241 residues: Terpene cyclase terB (241 aa).

A run of 5 helical transmembrane segments spans residues 19-39 (LADT…GAMI), 48-68 (YCMG…YTLV), 75-95 (VELA…FAAT), 114-134 (LIFL…AAEI), and 137-157 (ALAY…GGVC). Residue asparagine 163 is glycosylated (N-linked (GlcNAc...) asparagine). Transmembrane regions (helical) follow at residues 169–189 (SVTL…FAFL) and 198–218 (FAWL…LADI).

It belongs to the paxB family.

Its subcellular location is the membrane. Its pathway is secondary metabolite biosynthesis. Functionally, terpene cyclase; part of the gene cluster that mediates the biosynthesis of terpendoles, indole-diterpene (IDT) mycotoxins including terpendole I, terpendole K, terpendole C, as well as the kinesin Eg5 inhibitor terpendole E. Terpendoles biosynthesis begins with the synthesis of geranylgeranyl diphosphate (GGPP) by a yet unidentified GGPP synthase. Condensation of indole-3-glycerol phosphate with GGPP by the prenyltransferase terC then forms 3-geranylgeranylindole (3-GGI), followed by epoxidation and cyclization of this intermediate (by the FAD-dependent monooxygeanse terM and the terpene cyclase terB) to form paspaline. The cytochrome monooxygenase terQ then hydroxylates paspalline at C-11 to yield terpendole E. The cytochrome monooxygenase terP converts terpendole E to 13-desoxyterpendole I, and terQ converts 13-desoxyterpendole I into terpendole I. TerF and terK are required for conversion of terpendole I to terpendole C which is further converted to terpendole K. This is Terpene cyclase terB from Tolypocladium album (Soil fungus).